The chain runs to 130 residues: Hypocretin neuropeptide precursor (130 aa).

An N-terminal signal peptide occupies residues 1 to 32 (MNFPSTKVPWAAVTLLLLLLLPPALLSLGVDA). Gln-33 bears the Pyrrolidone carboxylic acid mark. Disulfide bonds link Cys-38–Cys-44 and Cys-39–Cys-46. A Leucine amide modification is found at Leu-65. At Met-96 the chain carries Methionine amide. Residues 97-130 (GRRAGAELEPHPCSGRGCPTVTTTALAPRGGSGV) constitute a propeptide that is removed on maturation.

This sequence belongs to the orexin family. In terms of processing, specific enzymatic cleavages at paired basic residues yield the different active peptides. As to expression, restricted to neuronal cell bodies of the dorsal and lateral hypothalamus.

It is found in the rough endoplasmic reticulum. The protein resides in the cytoplasmic vesicle. The protein localises to the synapse. Its function is as follows. Neuropeptides that play a significant role in the regulation of food intake and sleep-wakefulness, possibly by coordinating the complex behavioral and physiologic responses of these complementary homeostatic functions. A broader role in the homeostatic regulation of energy metabolism, autonomic function, hormonal balance and the regulation of body fluids, is also suggested. Binds to orexin receptors HCRTR1/OX1R and HCRTR2/OX2R with a high affinity. Stimulates food intake. Modulates pituitary luteinizing hormone secretion in an ovarian steroid-dependent manner. Functionally, binds to orexin receptor HCRTR2/OX2R only. Stimulates food intake. Modulates pituitary luteinizing hormone secretion in an ovarian steroid-dependent manner. The polypeptide is Hypocretin neuropeptide precursor (Hcrt) (Mus musculus (Mouse)).